The following is a 369-amino-acid chain: Putative esterase slr0264 (369 aa).

Residues serine 162, aspartate 303, and histidine 334 each act as charge relay system in the active site.

The protein belongs to the AB hydrolase superfamily. AB hydrolase 4 family.

This Synechocystis sp. (strain ATCC 27184 / PCC 6803 / Kazusa) protein is Putative esterase slr0264.